Here is a 442-residue protein sequence, read N- to C-terminus: Shufflon protein B (442 aa).

The tract at residues methionine 1–glycine 361 is constant region. A variable region region spans residues threonine 362–lysine 442.

This is Shufflon protein B from Escherichia coli.